A 577-amino-acid polypeptide reads, in one-letter code: 2-succinyl-5-enolpyruvyl-6-hydroxy-3-cyclohexene-1-carboxylate synthase (577 aa).

It belongs to the TPP enzyme family. MenD subfamily. As to quaternary structure, homodimer. Mg(2+) serves as cofactor. The cofactor is Mn(2+). Thiamine diphosphate is required as a cofactor.

It carries out the reaction isochorismate + 2-oxoglutarate + H(+) = 5-enolpyruvoyl-6-hydroxy-2-succinyl-cyclohex-3-ene-1-carboxylate + CO2. Its pathway is quinol/quinone metabolism; 1,4-dihydroxy-2-naphthoate biosynthesis; 1,4-dihydroxy-2-naphthoate from chorismate: step 2/7. The protein operates within quinol/quinone metabolism; menaquinone biosynthesis. Catalyzes the thiamine diphosphate-dependent decarboxylation of 2-oxoglutarate and the subsequent addition of the resulting succinic semialdehyde-thiamine pyrophosphate anion to isochorismate to yield 2-succinyl-5-enolpyruvyl-6-hydroxy-3-cyclohexene-1-carboxylate (SEPHCHC). The polypeptide is 2-succinyl-5-enolpyruvyl-6-hydroxy-3-cyclohexene-1-carboxylate synthase (Enterococcus faecalis (strain ATCC 700802 / V583)).